A 460-amino-acid polypeptide reads, in one-letter code: Ammonium transporter Rh type C (460 aa).

Over 1–9 (MIWNTNLRW) the chain is Cytoplasmic. Residues 10–30 (RLPVACLLLEVALIALFGVFV) traverse the membrane as a helical segment. At 31–61 (RYDMDADPHWVQEKVIKNLSTDLENEFYYRY) the chain is on the extracellular side. An N-linked (GlcNAc...) asparagine glycan is attached at Asn-48. Residues 62–82 (PSFQDVHVMIFVGFGFLMTFL) form a helical membrane-spanning segment. Over 83 to 89 (QRYGYSS) the chain is Cytoplasmic. Residues 90–110 (VGFNFLLAAFGIQWALLMQGW) traverse the membrane as a helical segment. At 111-125 (LQSFDGRYILVDLEN) the chain is on the extracellular side. A helical membrane pass occupies residues 126–145 (LINADFCVGSVCVAFGAVLG). The Cytoplasmic portion of the chain corresponds to 146 to 151 (KVSPVQ). The chain crosses the membrane as a helical span at residues 152-174 (LLIMTLFQVTLFSINEYILLNLL). The Extracellular portion of the chain corresponds to 175 to 179 (EVKDS). The chain crosses the membrane as a helical span at residues 180 to 200 (GGSMTIHAFGAYFGLTVAWIL). The Cytoplasmic segment spans residues 201–219 (YRPNLHLSKERQSSTYHSD). The chain crosses the membrane as a helical span at residues 220–240 (LFAMIGTLFLWMYWPSFNSAI). Over 241–251 (SNHGDAQHRAA) the chain is Extracellular. A helical membrane pass occupies residues 252-272 (INTYCSLAACVLTSVALSSAL). Over 273 to 285 (HRKGKLDMVHIQN) the chain is Cytoplasmic. A helical membrane pass occupies residues 286 to 303 (ATLAGGVGLGTVAELMVL). The Extracellular segment spans residues 304-306 (PFG). Residues 307–329 (SLIIGFVCGIVSTLGFVYLTPFL) traverse the membrane as a helical segment. Topologically, residues 330-346 (ESRLHIQDTCGVHNLHG) are cytoplasmic. The chain crosses the membrane as a helical span at residues 347 to 367 (IPGIIGGIAGAVTASIANIDL). Residues 368-396 (YGEEGLAYAFGIERSKLNWSPNMQGRFQA) lie on the Extracellular side of the membrane. The helical transmembrane segment at 397-417 (AGLFVSLAMALVGGVIVGVIL) threads the bilayer. The Cytoplasmic segment spans residues 418 to 460 (RLPFWGQAPDENCFEDAVYWEIPKEPKSTALRSEDSSIKPPEP).

It belongs to the ammonium transporter (TC 2.A.49) family. Rh subfamily. In terms of assembly, homotrimer. N-glycosylated.

It is found in the apical cell membrane. The catalysed reaction is NH4(+)(in) = NH4(+)(out). The enzyme catalyses methylamine(out) = methylamine(in). It catalyses the reaction CO2(out) = CO2(in). Ammonium transporter involved in the maintenance of acid-base homeostasis. Transports ammonium and its related derivative methylammonium across the plasma membrane of epithelial cells likely contributing to renal transepithelial ammonia transport and ammonia metabolism. Postulated to primarily mediate an electroneutral bidirectional transport of NH3 ammonia species according to a mechanism that implies interaction of an NH4(+) ion with acidic residues of the pore entry followed by dissociation of NH4(+) into NH3 and H(+). As a result NH3 transits through the central pore and is protonated on the extracellular side reforming NH4(+). May act as a CO2 channel providing for renal acid secretion. The protein is Ammonium transporter Rh type C (RHCG) of Bos taurus (Bovine).